Reading from the N-terminus, the 299-residue chain is Mitochondrial 2-oxodicarboxylate carrier (299 aa).

Solcar repeat units follow at residues N11–L100, S107–I196, and L205–W294. Helical transmembrane passes span I17–V37, M62–A82, L100–G120, H179–V199, F211–A231, and I274–Y290.

It belongs to the mitochondrial carrier (TC 2.A.29) family.

The protein localises to the mitochondrion inner membrane. It catalyses the reaction 2-oxoadipate(in) + 2-oxoglutarate(out) = 2-oxoadipate(out) + 2-oxoglutarate(in). The enzyme catalyses hexanedioate(in) + 2-oxoglutarate(out) = hexanedioate(out) + 2-oxoglutarate(in). The catalysed reaction is L-2-aminoadipate(in) + 2-oxoglutarate(out) = L-2-aminoadipate(out) + 2-oxoglutarate(in). It carries out the reaction glutarate(in) + 2-oxoglutarate(out) = glutarate(out) + 2-oxoglutarate(in). It catalyses the reaction 2-oxoheptanedioate(in) + 2-oxoglutarate(out) = 2-oxoheptanedioate(out) + 2-oxoglutarate(in). The enzyme catalyses heptanedioate(in) + 2-oxoglutarate(out) = heptanedioate(out) + 2-oxoglutarate(in). The catalysed reaction is citrate(in) + 2-oxoglutarate(out) = citrate(out) + 2-oxoglutarate(in). Transports dicarboxylates across the inner membranes of mitochondria by a counter-exchange mechanism. Can transport 2-oxoadipate (2-oxohexanedioate), 2-oxoglutarate, adipate (hexanedioate), glutarate, and to a lesser extent, pimelate (heptanedioate), 2-oxopimelate (2-oxoheptanedioate), 2-aminoadipate (2-aminohexanedioate), oxaloacetate, and citrate. Plays a central role in catabolism of lysine, hydroxylysine, and tryptophan, by transporting common metabolite intermediates (such as 2-oxoadipate) into the mitochondria, where it is converted into acetyl-CoA and can enter the citric acid (TCA) cycle. The protein is Mitochondrial 2-oxodicarboxylate carrier (SLC25A21) of Bos taurus (Bovine).